The following is a 128-amino-acid chain: Insulin-like growth factor 2 (128 aa).

The N-terminal stretch at 1–24 (MGISMGKSMLVLLTFLAFASCCIA) is a signal peptide. The interval 25 to 52 (AYRPSETLCGGELVDTLQFVCGDRGFYF) is b. 3 disulfide bridges follow: cysteine 33–cysteine 71, cysteine 45–cysteine 84, and cysteine 70–cysteine 75. The tract at residues 53–64 (SRPASRVSRRSR) is c. The interval 65–85 (GIVEECCFRSCDLALLETYCA) is a. The interval 86–91 (TPAKSE) is d. Residues 92 to 128 (RDVSASLAVLPDNFPRYPVGKFFQYDTWRQSTQRLRR) constitute a propeptide, e peptide.

It belongs to the insulin family. As to quaternary structure, interacts with MYORG; this interaction is required for IGF2 secretion. Interacts with integrins ITGAV:ITGB3 and ITGA6:ITGB4; integrin-binding is required for IGF2 signaling. Post-translationally, proteolytically processed by PCSK4, proIGF2 is cleaved at Arg-128 and Arg-92 to generate big-IGF2 and mature IGF2.

It is found in the secreted. In terms of biological role, the insulin-like growth factors possess growth-promoting activity. Major fetal growth hormone in mammals. Plays a key role in regulating fetoplacental development. IGF2 is influenced by placental lactogen. Also involved in tissue differentiation. In adults, involved in glucose metabolism in adipose tissue, skeletal muscle and liver. Acts as a ligand for integrin which is required for IGF2 signaling. Positively regulates myogenic transcription factor MYOD1 function by facilitating the recruitment of transcriptional coactivators, thereby controlling muscle terminal differentiation. Inhibits myoblast differentiation and metabolism via increasing the mitochondrial respiration rate. Functionally, preptin undergoes glucose-mediated co-secretion with insulin, and acts as a physiological amplifier of glucose-mediated insulin secretion. Exhibits osteogenic properties by increasing osteoblast mitogenic activity through phosphoactivation of MAPK1 and MAPK3. This chain is Insulin-like growth factor 2, found in Cavia porcellus (Guinea pig).